Consider the following 512-residue polypeptide: Cytochrome P450 98A1 (512 aa).

A helical transmembrane segment spans residues 3–23; that stretch reads ASLLLSVALAVVLIPLSLALL. Cys-441 is a binding site for heme.

Belongs to the cytochrome P450 family. Heme is required as a cofactor.

The protein localises to the membrane. The polypeptide is Cytochrome P450 98A1 (CYP98A1) (Sorghum bicolor (Sorghum)).